A 102-amino-acid polypeptide reads, in one-letter code: Peptide chaperone MftB (102 aa).

It belongs to the peptide chaperone MftB family.

Functionally, peptide chaperone involved in the biosynthesis of the enzyme cofactor mycofactocin (MFT). Binds MftA and MftC with high affinity, and is essential for MftC activity on MftA, likely via the formation of a ternary complex. Is required for the in vivo ethanol assimilation in M.smegmatis. In Mycolicibacterium smegmatis (strain ATCC 700084 / mc(2)155) (Mycobacterium smegmatis), this protein is Peptide chaperone MftB.